The following is a 373-amino-acid chain: Spermidine/putrescine import ATP-binding protein PotA (373 aa).

The 231-residue stretch at 8 to 238 (FELRGVSKYF…PANLYVARFV (231 aa)) folds into the ABC transporter domain. 40 to 47 (GPSGCGKT) provides a ligand contact to ATP.

The protein belongs to the ABC transporter superfamily. Spermidine/putrescine importer (TC 3.A.1.11.1) family. As to quaternary structure, the complex is composed of two ATP-binding proteins (PotA), two transmembrane proteins (PotB and PotC) and a solute-binding protein (PotD).

It is found in the cell inner membrane. The enzyme catalyses ATP + H2O + polyamine-[polyamine-binding protein]Side 1 = ADP + phosphate + polyamineSide 2 + [polyamine-binding protein]Side 1.. Functionally, part of the ABC transporter complex PotABCD involved in spermidine/putrescine import. Responsible for energy coupling to the transport system. The polypeptide is Spermidine/putrescine import ATP-binding protein PotA (Oleidesulfovibrio alaskensis (strain ATCC BAA-1058 / DSM 17464 / G20) (Desulfovibrio alaskensis)).